The following is a 147-amino-acid chain: MKYKKKEKEELKKILTEEEYYVTQENGTERPFTNEYWDFNGEGIYVDITTGEPLFTSKDKFHSSCGWPAFSKPIDRSIIKEKVDKSHGMVRTEVRSKLGDSHLGHVFCDGPEELGGLRYCINSASLKFIPKEELKEKGYEEYLELFK.

Residues 8–131 (KEELKKILTE…NSASLKFIPK (124 aa)) form the MsrB domain. The active-site Nucleophile is Cys-120.

It belongs to the MsrB Met sulfoxide reductase family.

The catalysed reaction is L-methionyl-[protein] + [thioredoxin]-disulfide + H2O = L-methionyl-(R)-S-oxide-[protein] + [thioredoxin]-dithiol. The protein is Peptide methionine sulfoxide reductase MsrB of Clostridium perfringens (strain SM101 / Type A).